The sequence spans 103 residues: MSGRGKGGKGLGKGGAKRHRKILRDNIQGITKPAIRRLARRGGVKRISGLIYEETRGVLKVFLENVIRDAVTYTEHAKRKTVTAMDVVYALKRQGRTLYGFGG.

The segment covering 1–14 has biased composition (gly residues); that stretch reads MSGRGKGGKGLGKG. The interval 1–20 is disordered; the sequence is MSGRGKGGKGLGKGGAKRHR. An N-acetylserine modification is found at Ser2. N6-acetyl-N6-methyllysine; alternate occurs at positions 6 and 13. Lys17 carries the N6-acetyllysine modification. A DNA-binding region spans residues 17-21; sequence KRHRK. Lys21 carries the N6-methyllysine modification.

This sequence belongs to the histone H4 family. The nucleosome is a histone octamer containing two molecules each of H2A, H2B, H3 and H4 assembled in one H3-H4 heterotetramer and two H2A-H2B heterodimers. The octamer wraps approximately 147 bp of DNA.

It is found in the nucleus. It localises to the chromosome. Its function is as follows. Core component of nucleosome. Nucleosomes wrap and compact DNA into chromatin, limiting DNA accessibility to the cellular machineries which require DNA as a template. Histones thereby play a central role in transcription regulation, DNA repair, DNA replication and chromosomal stability. DNA accessibility is regulated via a complex set of post-translational modifications of histones, also called histone code, and nucleosome remodeling. The sequence is that of Histone H4 (H4DEKL) from Dendronephthya klunzingeri (Klunzinger's soft coral).